An 844-amino-acid chain; its full sequence is DNA mismatch repair protein MutS (844 aa).

ATP is bound at residue 610-617 (GPNMGGKS).

The protein belongs to the DNA mismatch repair MutS family.

This protein is involved in the repair of mismatches in DNA. It is possible that it carries out the mismatch recognition step. This protein has a weak ATPase activity. This Francisella tularensis subsp. tularensis (strain WY96-3418) protein is DNA mismatch repair protein MutS.